A 691-amino-acid polypeptide reads, in one-letter code: tRNA-dihydrouridine(47) synthase [NAD(P)(+)]-like (691 aa).

An N-acetylserine modification is found at Ser2. The disordered stretch occupies residues 55–94 (PPPPSRSVKQNDAADVRAPQSGLVQEKKSKRQLKRERREQ). 2 C3H1-type zinc fingers span residues 94 to 125 (QSTI…HDIE) and 138 to 163 (QCPF…HRDI). Residues 259-286 (LETEEVRPMKKAKSEDQKNSKTGDVGGV) are disordered. Over residues 262–279 (EEVRPMKKAKSEDQKNSK) the composition is skewed to basic and acidic residues. Residues 344-346 (PLT) and Gln398 contribute to the FMN site. Cys429 acts as the Proton donor in catalysis. FMN-binding positions include Lys468, His498, 531 to 533 (NGD), and 556 to 557 (AR).

This sequence belongs to the Dus family. Dus3 subfamily. FMN is required as a cofactor.

It catalyses the reaction 5,6-dihydrouridine(47) in tRNA + NAD(+) = uridine(47) in tRNA + NADH + H(+). The catalysed reaction is 5,6-dihydrouridine(47) in tRNA + NADP(+) = uridine(47) in tRNA + NADPH + H(+). It carries out the reaction a 5,6-dihydrouridine in mRNA + NAD(+) = a uridine in mRNA + NADH + H(+). The enzyme catalyses a 5,6-dihydrouridine in mRNA + NADP(+) = a uridine in mRNA + NADPH + H(+). In terms of biological role, catalyzes the synthesis of dihydrouridine, a modified base found in the D-loop of most tRNAs. Specifically modifies U47 in cytoplasmic tRNAs. Catalyzes the synthesis of dihydrouridine in some mRNAs, thereby affecting their translation. The polypeptide is tRNA-dihydrouridine(47) synthase [NAD(P)(+)]-like (Arabidopsis thaliana (Mouse-ear cress)).